Reading from the N-terminus, the 634-residue chain is Probable potassium transport system protein Kup (634 aa).

12 helical membrane-spanning segments follow: residues I21–L41, I61–I81, I110–I130, P148–C168, F180–A200, F217–T237, W258–L278, G296–I316, I348–F368, A377–A397, L408–I428, and D432–L452.

Belongs to the HAK/KUP transporter (TC 2.A.72) family.

It localises to the cell inner membrane. It carries out the reaction K(+)(in) + H(+)(in) = K(+)(out) + H(+)(out). In terms of biological role, transport of potassium into the cell. Likely operates as a K(+):H(+) symporter. The sequence is that of Probable potassium transport system protein Kup from Xylella fastidiosa (strain 9a5c).